We begin with the raw amino-acid sequence, 463 residues long: MSPPRKLHIKSYGCQMNVYDAQRMVDALAPEGFVETANVDDADLVILNTCHIREKASEKVYSELGRLRVARDEAANHGRRMQIAVAGCVAQAEGEEIIRRAPVVDVVVGPQSYHNLPQLLAKAEQHGRALETEFPIEDKFGVLPQPAPDAIRARGISAFVTVQEGCDKFCTFCVVPYTRGAEMSRPVVAIVEDVKRLAENGVREVTLIGQNVNAYHGDGPDGRAWSLGRLVRRLAEIPGIVRLRYSTSHPNDVDDDLLAAHRDLPALMPFVHLPVQSGSDRILAAMNRKHTADDYRRVIDRFRSASETIAFSSDFIVGFPGETERDFSATLALVAQIGYAGAYSFKYSPRPGTPAADMVEMVPAAVMDERLEQLQQLIDQQQSAFNKAAIGRTVEVLFERAGRKPGQIVGRTAYLQPAHVMAPDSIIGKVLPVRVDSLERYSLLGELASATSRPADAMAATGA.

In terms of domain architecture, MTTase N-terminal spans 5–125; it reads RKLHIKSYGC…LPQLLAKAEQ (121 aa). 6 residues coordinate [4Fe-4S] cluster: C14, C50, C88, C166, C170, and C173. A Radical SAM core domain is found at 152-384; it reads RARGISAFVT…QQLIDQQQSA (233 aa). The TRAM domain maps to 387 to 449; sequence KAAIGRTVEV…RYSLLGELAS (63 aa).

The protein belongs to the methylthiotransferase family. MiaB subfamily. Monomer. It depends on [4Fe-4S] cluster as a cofactor.

It is found in the cytoplasm. The catalysed reaction is N(6)-dimethylallyladenosine(37) in tRNA + (sulfur carrier)-SH + AH2 + 2 S-adenosyl-L-methionine = 2-methylsulfanyl-N(6)-dimethylallyladenosine(37) in tRNA + (sulfur carrier)-H + 5'-deoxyadenosine + L-methionine + A + S-adenosyl-L-homocysteine + 2 H(+). In terms of biological role, catalyzes the methylthiolation of N6-(dimethylallyl)adenosine (i(6)A), leading to the formation of 2-methylthio-N6-(dimethylallyl)adenosine (ms(2)i(6)A) at position 37 in tRNAs that read codons beginning with uridine. This is tRNA-2-methylthio-N(6)-dimethylallyladenosine synthase from Rhodopseudomonas palustris (strain TIE-1).